Reading from the N-terminus, the 202-residue chain is FMN-dependent NADH:quinone oxidoreductase 2 (202 aa).

FMN is bound by residues S9, S15–S17, M95–F98, and T139–G142.

The protein belongs to the azoreductase type 1 family. As to quaternary structure, homodimer. FMN serves as cofactor.

It carries out the reaction 2 a quinone + NADH + H(+) = 2 a 1,4-benzosemiquinone + NAD(+). It catalyses the reaction N,N-dimethyl-1,4-phenylenediamine + anthranilate + 2 NAD(+) = 2-(4-dimethylaminophenyl)diazenylbenzoate + 2 NADH + 2 H(+). Its function is as follows. Quinone reductase that provides resistance to thiol-specific stress caused by electrophilic quinones. Reduces both benzoquinones and naphthoquinones efficiently. Also exhibits azoreductase activity. Catalyzes the reductive cleavage of the azo bond in aromatic azo compounds to the corresponding amines. Preferred substrates are the large bis-azo dye Ponceau BS, amaranth and tropaeolin O. The sequence is that of FMN-dependent NADH:quinone oxidoreductase 2 from Pseudomonas aeruginosa (strain ATCC 15692 / DSM 22644 / CIP 104116 / JCM 14847 / LMG 12228 / 1C / PRS 101 / PAO1).